Consider the following 387-residue polypeptide: 3-ketoacyl-CoA thiolase (387 aa).

Catalysis depends on C91, which acts as the Acyl-thioester intermediate. Catalysis depends on proton acceptor residues H343 and C373.

The protein belongs to the thiolase-like superfamily. Thiolase family. Heterotetramer of two alpha chains (FadB) and two beta chains (FadA).

It localises to the cytoplasm. It carries out the reaction an acyl-CoA + acetyl-CoA = a 3-oxoacyl-CoA + CoA. It functions in the pathway lipid metabolism; fatty acid beta-oxidation. Functionally, catalyzes the final step of fatty acid oxidation in which acetyl-CoA is released and the CoA ester of a fatty acid two carbons shorter is formed. This chain is 3-ketoacyl-CoA thiolase, found in Vibrio cholerae serotype O1 (strain ATCC 39315 / El Tor Inaba N16961).